The primary structure comprises 232 residues: RNA chaperone ProQ (232 aa).

A disordered region spans residues 105–182; it reads EAKARVQAQR…REEQHTPVSD (78 aa). The segment covering 117 to 136 has biased composition (basic and acidic residues); it reads QQAKKREAAAAAGEKEDAPR. Residues 137 to 146 are compositionally biased toward basic residues; the sequence is RERKPRPTTP. Over residues 147 to 177 the composition is skewed to basic and acidic residues; sequence RRKEGAERKPRAQKPVEKAPKTVKAPREEQH.

Belongs to the ProQ family.

The protein localises to the cytoplasm. Functionally, RNA chaperone with significant RNA binding, RNA strand exchange and RNA duplexing activities. May regulate ProP activity through an RNA-based, post-transcriptional mechanism. The chain is RNA chaperone ProQ from Shigella flexneri serotype 5b (strain 8401).